The sequence spans 655 residues: Interferon-induced GTP-binding protein Mx2 (655 aa).

The span at 1–18 (MVLSTEENTGVDSVNLPS) shows a compositional bias: polar residues. The interval 1–28 (MVLSTEENTGVDSVNLPSGETGLGEKDQ) is disordered. Residues 60–333 (DLALPAIAVI…LISHICKSLP (274 aa)) enclose the Dynamin-type G domain. The interval 70-77 (GDQSSGKS) is G1 motif. 70–77 (GDQSSGKS) is a GTP binding site. Positions 95 to 97 (VTR) are G2 motif. The G3 motif stretch occupies residues 171 to 174 (DLPG). Residues 171–175 (DLPGI) and 240–243 (TKPD) contribute to the GTP site. A G4 motif region spans residues 240–243 (TKPD). The segment at 272 to 275 (KCRG) is G5 motif. Residues 542-562 (EAEEEKKTKHGTSSSSQSQDL) are disordered. Positions 552–562 (GTSSSSQSQDL) are enriched in low complexity. Residues 567–655 (MAEIFQHLNA…ARRRLAKFPG (89 aa)) enclose the GED domain.

The protein belongs to the TRAFAC class dynamin-like GTPase superfamily. Dynamin/Fzo/YdjA family.

It is found in the cytoplasm. Interferon-induced dynamin-like GTPase with antiviral activity against vesicular stomatitis virus (VSV) and Hantaan virus (HNTV). This is Interferon-induced GTP-binding protein Mx2 (Mx2) from Mus musculus (Mouse).